The chain runs to 515 residues: Cytochrome P450 monooxygenase janP (515 aa).

A helical membrane pass occupies residues 20–36 (GFLWKYAAFMVFIYLLL). C456 contacts heme. N501 carries an N-linked (GlcNAc...) asparagine glycan.

It belongs to the cytochrome P450 family. Heme is required as a cofactor.

The protein resides in the membrane. The protein operates within secondary metabolite biosynthesis. Cytochrome P450 monooxygenase; part of the gene cluster that mediates the biosynthesis of the indole diterpenes janthitremanes such as shearinine K or shearinine A. The geranylgeranyl diphosphate (GGPP) synthase janG catalyzes the first step in janthitremane biosynthesis via conversion of farnesyl pyrophosphate and isopentyl pyrophosphate into geranylgeranyl pyrophosphate (GGPP). Condensation of indole-3-glycerol phosphate with GGPP by the prenyl transferase janC then forms 3-geranylgeranylindole (3-GGI). Epoxidation by the FAD-dependent monooxygenase janM leads to a epoxidized-GGI that is substrate of the terpene cyclase janB for cyclization to yield paspaline. Paspaline is subsequently converted to 13-desoxypaspaline by the cytochrome P450 monooxygenase janP, via beta-PC-M6 in a series of alpha-face oxidations. The cytochrome P450 monooxygenase janQ is proposed to carry out sequential beta-face oxidation steps at C-7 and C-13 of 13-desoxypaspaline to form paspalicine and paspalinine respectively. The indole diterpene prenyltransferase janD may then convert paspalinine into shearinine K which is substrate of janO and/or additional enzymes for oxidation and cyclization to generate shearinine A. The polypeptide is Cytochrome P450 monooxygenase janP (Penicillium janthinellum (Penicillium vitale)).